We begin with the raw amino-acid sequence, 295 residues long: Ribosomal RNA small subunit methyltransferase A (295 aa).

Asn-29, Leu-31, Gly-56, Glu-77, Asp-102, and Asn-128 together coordinate S-adenosyl-L-methionine.

The protein belongs to the class I-like SAM-binding methyltransferase superfamily. rRNA adenine N(6)-methyltransferase family. RsmA subfamily.

Its subcellular location is the cytoplasm. The enzyme catalyses adenosine(1518)/adenosine(1519) in 16S rRNA + 4 S-adenosyl-L-methionine = N(6)-dimethyladenosine(1518)/N(6)-dimethyladenosine(1519) in 16S rRNA + 4 S-adenosyl-L-homocysteine + 4 H(+). In terms of biological role, specifically dimethylates two adjacent adenosines (A1518 and A1519) in the loop of a conserved hairpin near the 3'-end of 16S rRNA in the 30S particle. May play a critical role in biogenesis of 30S subunits. The protein is Ribosomal RNA small subunit methyltransferase A of Listeria monocytogenes serovar 1/2a (strain ATCC BAA-679 / EGD-e).